Here is a 476-residue protein sequence, read N- to C-terminus: Aspartyl/glutamyl-tRNA(Asn/Gln) amidotransferase subunit B (476 aa).

It belongs to the GatB/GatE family. GatB subfamily. In terms of assembly, heterotrimer of A, B and C subunits.

The enzyme catalyses L-glutamyl-tRNA(Gln) + L-glutamine + ATP + H2O = L-glutaminyl-tRNA(Gln) + L-glutamate + ADP + phosphate + H(+). It carries out the reaction L-aspartyl-tRNA(Asn) + L-glutamine + ATP + H2O = L-asparaginyl-tRNA(Asn) + L-glutamate + ADP + phosphate + 2 H(+). In terms of biological role, allows the formation of correctly charged Asn-tRNA(Asn) or Gln-tRNA(Gln) through the transamidation of misacylated Asp-tRNA(Asn) or Glu-tRNA(Gln) in organisms which lack either or both of asparaginyl-tRNA or glutaminyl-tRNA synthetases. The reaction takes place in the presence of glutamine and ATP through an activated phospho-Asp-tRNA(Asn) or phospho-Glu-tRNA(Gln). The polypeptide is Aspartyl/glutamyl-tRNA(Asn/Gln) amidotransferase subunit B (Solidesulfovibrio magneticus (strain ATCC 700980 / DSM 13731 / RS-1) (Desulfovibrio magneticus)).